A 271-amino-acid polypeptide reads, in one-letter code: ATP synthase subunit a (271 aa).

Transmembrane regions (helical) follow at residues 40–60 (TINIDSMFFSVVLGLLFLVLF), 100–120 (LIAPLALTIFVWVFLMNLMDL), 146–166 (DVNVTLSMALGVFILILFYSI), 220–240 (LIFILIAGLLPWWSQWILNVP), and 242–262 (AIFHILIITLQAFIFMVLTIV).

The protein belongs to the ATPase A chain family. In terms of assembly, F-type ATPases have 2 components, CF(1) - the catalytic core - and CF(0) - the membrane proton channel. CF(1) has five subunits: alpha(3), beta(3), gamma(1), delta(1), epsilon(1). CF(0) has three main subunits: a(1), b(2) and c(9-12). The alpha and beta chains form an alternating ring which encloses part of the gamma chain. CF(1) is attached to CF(0) by a central stalk formed by the gamma and epsilon chains, while a peripheral stalk is formed by the delta and b chains.

Its subcellular location is the cell inner membrane. Its function is as follows. Key component of the proton channel; it plays a direct role in the translocation of protons across the membrane. This Escherichia coli O1:K1 / APEC protein is ATP synthase subunit a.